Reading from the N-terminus, the 408-residue chain is LL-diaminopimelate aminotransferase (408 aa).

2 residues coordinate substrate: Y15 and G42. Pyridoxal 5'-phosphate contacts are provided by residues Y72, 108–109 (SK), Y132, N187, Y218, and 246–248 (SFS). 3 residues coordinate substrate: K109, Y132, and N187. K249 is subject to N6-(pyridoxal phosphate)lysine. Positions 257 and 291 each coordinate pyridoxal 5'-phosphate. Substrate is bound by residues N291 and R387.

This sequence belongs to the class-I pyridoxal-phosphate-dependent aminotransferase family. LL-diaminopimelate aminotransferase subfamily. Homodimer. It depends on pyridoxal 5'-phosphate as a cofactor.

It carries out the reaction (2S,6S)-2,6-diaminopimelate + 2-oxoglutarate = (S)-2,3,4,5-tetrahydrodipicolinate + L-glutamate + H2O + H(+). It functions in the pathway amino-acid biosynthesis; L-lysine biosynthesis via DAP pathway; LL-2,6-diaminopimelate from (S)-tetrahydrodipicolinate (aminotransferase route): step 1/1. Its function is as follows. Involved in the synthesis of meso-diaminopimelate (m-DAP or DL-DAP), required for both lysine and peptidoglycan biosynthesis. Catalyzes the direct conversion of tetrahydrodipicolinate to LL-diaminopimelate. This Prochlorococcus marinus (strain NATL1A) protein is LL-diaminopimelate aminotransferase.